A 192-amino-acid polypeptide reads, in one-letter code: Sarcoplasmic calcium-binding protein 1 (192 aa).

Alanine 1 is subject to N-acetylalanine. 4 consecutive EF-hand domains span residues tryptophan 4 to isoleucine 39, isoleucine 56 to glycine 91, alanine 100 to phenylalanine 135, and alanine 136 to phenylalanine 171. Residues aspartate 17, aspartate 19, asparagine 21, aspartate 28, aspartate 69, asparagine 71, aspartate 73, glutamate 75, glutamate 80, aspartate 113, asparagine 115, aspartate 117, and glutamate 124 each coordinate Ca(2+).

As to quaternary structure, SCPs from crayfish, lobster, and shrimp are polymorphic dimers.

Like parvalbumins, SCPs seem to be more abundant in fast contracting muscles, but no functional relationship can be established from this distribution. The protein is Sarcoplasmic calcium-binding protein 1 of Astacus leptodactylus (Turkish narrow-clawed crayfish).